We begin with the raw amino-acid sequence, 347 residues long: Ribosomal RNA small subunit methyltransferase C (347 aa).

Belongs to the methyltransferase superfamily. RsmC family. In terms of assembly, monomer.

It localises to the cytoplasm. It catalyses the reaction guanosine(1207) in 16S rRNA + S-adenosyl-L-methionine = N(2)-methylguanosine(1207) in 16S rRNA + S-adenosyl-L-homocysteine + H(+). In terms of biological role, specifically methylates the guanine in position 1207 of 16S rRNA in the 30S particle. This is Ribosomal RNA small subunit methyltransferase C from Shewanella putrefaciens (strain CN-32 / ATCC BAA-453).